We begin with the raw amino-acid sequence, 82 residues long: RNA-binding protein TTE2299 (82 aa).

It belongs to the eukaryotic ribosomal protein eL8 family.

In Caldanaerobacter subterraneus subsp. tengcongensis (strain DSM 15242 / JCM 11007 / NBRC 100824 / MB4) (Thermoanaerobacter tengcongensis), this protein is RNA-binding protein TTE2299.